Consider the following 474-residue polypeptide: Vitamin D-binding protein (474 aa).

Positions 1–16 (MKRILVFLLAVAFVHA) are cleaved as a signal peptide. 3 Albumin domains span residues 17 to 208 (LERG…QLKH), 209 to 393 (FSLL…QLTR), and 394 to 474 (ELSS…TLQS). Disulfide bonds link cysteine 29–cysteine 75 and cysteine 74–cysteine 83. Residue asparagine 86 is glycosylated (N-linked (GlcNAc...) asparagine). 12 disulfides stabilise this stretch: cysteine 96/cysteine 112, cysteine 111/cysteine 122, cysteine 145/cysteine 190, cysteine 189/cysteine 198, cysteine 220/cysteine 266, cysteine 265/cysteine 273, cysteine 285/cysteine 299, cysteine 298/cysteine 310, cysteine 334/cysteine 375, cysteine 374/cysteine 383, cysteine 406/cysteine 452, and cysteine 451/cysteine 461. N-linked (GlcNAc...) asparagine glycosylation occurs at asparagine 287.

Belongs to the ALB/AFP/VDB family. In terms of assembly, associates with membrane-bound immunoglobulin on the surface of B-lymphocytes and with IgG Fc receptor on the membranes of T-lymphocytes. Interacts with LRP2; the interaction is required for renal uptake of GC in complex with 25-hydroxyvitamin D3.

It is found in the secreted. Involved in vitamin D transport and storage, scavenging of extracellular G-actin, enhancement of the chemotactic activity of C5 alpha for neutrophils in inflammation and macrophage activation. This chain is Vitamin D-binding protein (GC), found in Bos taurus (Bovine).